The sequence spans 1452 residues: Pleiotropic drug resistance protein 1 (1452 aa).

Residues 152–425 (LNYLHILPNR…FEYMGFICPE (274 aa)) enclose the ABC transporter 1 domain. 185–192 (GPPSSGKT) is a binding site for ATP. Residues 504–716 (LLKACTAREY…AQNAIAVNEF (213 aa)) enclose the ABC transmembrane type-2 1 domain. 7 helical membrane passes run 521 to 541 (FVYI…MTLF), 554 to 574 (GAVF…NGFS), 609 to 629 (IPIT…VIGF), 640 to 660 (LLLL…MGAL), 664 to 684 (IIVA…MGGF), 694 to 714 (WWIW…IAVN), and 753 to 773 (IGAG…AVAL). The tract at residues 808–830 (LGKSSSEKGNDVRRSASSRSMSS) is disordered. Residues 812-821 (SSEKGNDVRR) show a composition bias toward basic and acidic residues. One can recognise an ABC transporter 2 domain in the interval 855-1107 (ITFDDIRYAV…HLIKYFEGID (253 aa)). 900–907 (GVSGAGKT) contributes to the ATP binding site. The 215-residue stretch at 1180 to 1394 (TQCMACFWKQ…TLYGLIASQF (215 aa)) folds into the ABC transmembrane type-2 2 domain. 7 consecutive transmembrane segments (helical) span residues 1199-1219 (YTAV…TIFW), 1239-1259 (YIAV…VIAI), 1287-1307 (LPYL…MIGF), 1314-1334 (FFWY…YGMM), 1344-1364 (IAAI…GFIV), 1375-1395 (WYYY…SQFG), and 1421-1441 (FVGY…FIFA).

It belongs to the ABC transporter superfamily. ABCG family. PDR (TC 3.A.1.205) subfamily. Expressed in root hypodermal passage cells. Expressed in stem tissues, particularly the vasculature and nodes adjacent to leaf axils.

The protein resides in the cell membrane. Cellular strigolactone (SL) transporter required for the exudation of SL from the root to the soil. The presence of SL in the vicinity of the roots is required for development of symbiotic interactions with arbuscular mycorrhizal fungi (AMF). Transports SL in the above ground tissues and is required for the control of shoot branching. SL regulates plant shoot architecture by inhibiting the outgrowth of axillary buds. Involved in the regulation of shootward and outward directional strigolactone transport in roots. Due to its polar localization in root cells, mediates directional shootward strigolactone transport, as well as localized outward directional transport for exudation to the soil. This is Pleiotropic drug resistance protein 1 from Petunia axillaris (Large white petunia).